Reading from the N-terminus, the 522-residue chain is ATP synthase subunit alpha, mitochondrial (522 aa).

An ATP-binding site is contributed by 172–179 (GDRQTGKT).

The protein belongs to the ATPase alpha/beta chains family. As to quaternary structure, F-type ATPases have 2 components, CF(1) - the catalytic core - and CF(0) - the membrane proton channel. CF(1) has five subunits: alpha(3), beta(3), gamma(1), delta(1), epsilon(1). CF(0) has three main subunits: a, b and c.

The protein resides in the mitochondrion. The protein localises to the mitochondrion inner membrane. Its function is as follows. Mitochondrial membrane ATP synthase (F(1)F(0) ATP synthase or Complex V) produces ATP from ADP in the presence of a proton gradient across the membrane which is generated by electron transport complexes of the respiratory chain. F-type ATPases consist of two structural domains, F(1) - containing the extramembraneous catalytic core, and F(0) - containing the membrane proton channel, linked together by a central stalk and a peripheral stalk. During catalysis, ATP synthesis in the catalytic domain of F(1) is coupled via a rotary mechanism of the central stalk subunits to proton translocation. Subunits alpha and beta form the catalytic core in F(1). Rotation of the central stalk against the surrounding alpha(3)beta(3) subunits leads to hydrolysis of ATP in three separate catalytic sites on the beta subunits. Subunit alpha does not bear the catalytic high-affinity ATP-binding sites. This chain is ATP synthase subunit alpha, mitochondrial (ATP1), found in Acanthamoeba castellanii (Amoeba).